Here is a 503-residue protein sequence, read N- to C-terminus: MDFSIKPLDAKSTIASIKTGCIAVAVFEDKKLSAAAQALDQKGGISAALKSGDISGKAGSTLLLRGVSGVAAERVLLVGLGKEDPVSEKDFSSAVQAVARAFTSLGATEAVIALPLDAVAARDAAWSIRCTILNTRDASYRFDSLKSKKEPAPAGVKKIVFAVSAASTAIAKDAIAQAVAQANGIDLTKDLGNLPANVCTPTYLANTAKKMAKEFKLQVEVLDRKQLQALKMGSFLSVTNGSVEPPKFIVLKHMGGKAKDAPVVLVGKGITFDSGGISLKPGAAMDEMKYDMGGAASVLGTMRAIAELKLKLNVIVVIPTCENMPSGSATKPGDIVTSMSGQTIEVLNTDAEGRLVLCDALTYVERFKPAAVIDVATLTGACITALGHHNSGLFTRSDDAHDALANELLAAGKASGDTAWRMPIEDSYQEQLKSNFADMANIGGPAGGAVTAACFLERYTKKYTWAHLDIAGTAWKSGAAKGSTGRPVPLLTSFLIQRAQTAR.

Positions 268 and 273 each coordinate Mn(2+). The active site involves Lys-280. Residues Asp-291, Asp-350, and Glu-352 each coordinate Mn(2+). Arg-354 is a catalytic residue.

Belongs to the peptidase M17 family. Mn(2+) serves as cofactor.

It localises to the cytoplasm. The enzyme catalyses Release of an N-terminal amino acid, Xaa-|-Yaa-, in which Xaa is preferably Leu, but may be other amino acids including Pro although not Arg or Lys, and Yaa may be Pro. Amino acid amides and methyl esters are also readily hydrolyzed, but rates on arylamides are exceedingly low.. It catalyses the reaction Release of an N-terminal amino acid, preferentially leucine, but not glutamic or aspartic acids.. Its function is as follows. Presumably involved in the processing and regular turnover of intracellular proteins. Catalyzes the removal of unsubstituted N-terminal amino acids from various peptides. This chain is Probable cytosol aminopeptidase, found in Herminiimonas arsenicoxydans.